The sequence spans 202 residues: Molybdenum cofactor guanylyltransferase (202 aa).

Residues Leu-9–Gly-11, Lys-22, Asp-70, and Asp-96 each bind GTP. Asp-96 lines the Mg(2+) pocket.

This sequence belongs to the MobA family. In terms of assembly, monomer. The cofactor is Mg(2+).

Its subcellular location is the cytoplasm. The catalysed reaction is Mo-molybdopterin + GTP + H(+) = Mo-molybdopterin guanine dinucleotide + diphosphate. In terms of biological role, transfers a GMP moiety from GTP to Mo-molybdopterin (Mo-MPT) cofactor (Moco or molybdenum cofactor) to form Mo-molybdopterin guanine dinucleotide (Mo-MGD) cofactor. This chain is Molybdenum cofactor guanylyltransferase, found in Desulfosudis oleivorans (strain DSM 6200 / JCM 39069 / Hxd3) (Desulfococcus oleovorans).